Here is a 357-residue protein sequence, read N- to C-terminus: Alanine racemase, catabolic (357 aa).

The active-site Proton acceptor; specific for D-alanine is Lys-33. Lys-33 is subject to N6-(pyridoxal phosphate)lysine. Residue Arg-129 participates in substrate binding. The active-site Proton acceptor; specific for L-alanine is the Tyr-253. Met-301 contacts substrate.

This sequence belongs to the alanine racemase family. Pyridoxal 5'-phosphate is required as a cofactor.

It catalyses the reaction L-alanine = D-alanine. The protein operates within amino-acid biosynthesis; D-alanine biosynthesis; D-alanine from L-alanine: step 1/1. In terms of biological role, isomerizes L-alanine to D-alanine which is then likely oxidized to pyruvate by DadA. Shows racemase activity with both alanine stereoisomers, negligible activity with D-cysteine and L-serine, and exhibits no activity with the remaining natural chiral amino acids. In Pseudomonas putida (strain ATCC 47054 / DSM 6125 / CFBP 8728 / NCIMB 11950 / KT2440), this protein is Alanine racemase, catabolic.